The primary structure comprises 523 residues: Cytochrome P450 monooxygenase bsc5 (523 aa).

The chain crosses the membrane as a helical span at residues 16 to 36 (MQLHWTVLGLLPVLFIAILGP). N-linked (GlcNAc...) asparagine glycosylation is found at Asn-178, Asn-281, and Asn-403. Cys-459 provides a ligand contact to heme.

The protein belongs to the cytochrome P450 family. It depends on heme as a cofactor.

The protein resides in the membrane. It participates in mycotoxin biosynthesis. Cytochrome P450 monooxygenase; part of the gene cluster that mediates the biosynthesis of the diterpene glucoside brassicicene C. In the first step of the brassicicene C biosynthesis, the bifunctional diterpene synthase bsc8 that possesses both prenyl transferase and terpene cyclase activity, converts isopentenyl diphosphate and dimethylallyl diphosphate into geranylgeranyl diphosphate (GGDP) that is further converted into fusicocca-2,10(14)-diene, the first precursor for brassicicene C. Fusicocca-2,10(14)-diene is then substrate of cytochrome P450 monooxygenase bsc1 for hydroxylation at the C-8 position. Oxidation at C-16 position to aldehyde is then catalyzed by the cytochrome P450 monooyxygenase bsc7, yielding fusicocca-2,10(14)-diene-8-beta,16-diol. Follows the isomerization of the double bond and reduction of aldehyde to alcohol catalyzed by the short-chain dehydrogenase/reductase bsc3 to yield the diol compound fusicocca-1,10(14)-diene-8 beta,16-diol. The next step is the oxidation at the C-3 position of fusicocca-2,10(14)-diene-8-beta,16-diol catalyzed by the alpha-ketoglutarate dependent dioxygenase bsc9, to produce a triol compound. Methylation of the hydroxy group at position 16 is performed by the methyltransferase bsc6. 16-O-methylation is followed by oxidation at the C-13 position to ketone and an alkyl shift of the methyl group leads to brassicicene C. Although the probable acetyltransferase bsc4 is included in the gene cluster, no acetylation reactions are necessary for brassicicene C biosynthesis. However, the fact that brassicicene E, which is a structurally related compound having an acetoxy group at position 12, was previously isolated from another strain of A.brassicicola suggests that the ATCC 96836 strain might also produce a small amount of brassicicene E. This Alternaria brassicicola (Dark leaf spot agent) protein is Cytochrome P450 monooxygenase bsc5.